Here is a 329-residue protein sequence, read N- to C-terminus: 4-hydroxythreonine-4-phosphate dehydrogenase (329 aa).

Substrate is bound by residues His136 and Thr137. Positions 166, 211, and 266 each coordinate a divalent metal cation. Substrate is bound by residues Lys274, Asn283, and Arg292.

It belongs to the PdxA family. As to quaternary structure, homodimer. The cofactor is Zn(2+). Mg(2+) is required as a cofactor. Co(2+) serves as cofactor.

It localises to the cytoplasm. The catalysed reaction is 4-(phosphooxy)-L-threonine + NAD(+) = 3-amino-2-oxopropyl phosphate + CO2 + NADH. The protein operates within cofactor biosynthesis; pyridoxine 5'-phosphate biosynthesis; pyridoxine 5'-phosphate from D-erythrose 4-phosphate: step 4/5. Its function is as follows. Catalyzes the NAD(P)-dependent oxidation of 4-(phosphooxy)-L-threonine (HTP) into 2-amino-3-oxo-4-(phosphooxy)butyric acid which spontaneously decarboxylates to form 3-amino-2-oxopropyl phosphate (AHAP). The polypeptide is 4-hydroxythreonine-4-phosphate dehydrogenase (Pseudomonas putida (strain ATCC 47054 / DSM 6125 / CFBP 8728 / NCIMB 11950 / KT2440)).